The primary structure comprises 246 residues: tRNA (guanine-N(1)-)-methyltransferase (246 aa).

Residues G114 and 134–139 (IGDYIL) contribute to the S-adenosyl-L-methionine site.

Belongs to the RNA methyltransferase TrmD family. As to quaternary structure, homodimer.

The protein resides in the cytoplasm. The catalysed reaction is guanosine(37) in tRNA + S-adenosyl-L-methionine = N(1)-methylguanosine(37) in tRNA + S-adenosyl-L-homocysteine + H(+). In terms of biological role, specifically methylates guanosine-37 in various tRNAs. The polypeptide is tRNA (guanine-N(1)-)-methyltransferase (Coxiella burnetii (strain CbuK_Q154) (Coxiella burnetii (strain Q154))).